The following is a 388-amino-acid chain: Succinate--CoA ligase [ADP-forming] subunit beta (388 aa).

The ATP-grasp domain maps to 9–244 (KQLFARYGLP…QSQEDPREAQ (236 aa)). ATP contacts are provided by residues Lys-46, 53-55 (GRG), Glu-99, Thr-102, and Glu-107. Residues Asn-199 and Asp-213 each coordinate Mg(2+). Residues Asn-264 and 321–323 (GIV) each bind substrate.

The protein belongs to the succinate/malate CoA ligase beta subunit family. As to quaternary structure, heterotetramer of two alpha and two beta subunits. Requires Mg(2+) as cofactor.

It catalyses the reaction succinate + ATP + CoA = succinyl-CoA + ADP + phosphate. The catalysed reaction is GTP + succinate + CoA = succinyl-CoA + GDP + phosphate. It functions in the pathway carbohydrate metabolism; tricarboxylic acid cycle; succinate from succinyl-CoA (ligase route): step 1/1. Succinyl-CoA synthetase functions in the citric acid cycle (TCA), coupling the hydrolysis of succinyl-CoA to the synthesis of either ATP or GTP and thus represents the only step of substrate-level phosphorylation in the TCA. The beta subunit provides nucleotide specificity of the enzyme and binds the substrate succinate, while the binding sites for coenzyme A and phosphate are found in the alpha subunit. The chain is Succinate--CoA ligase [ADP-forming] subunit beta from Shigella dysenteriae serotype 1 (strain Sd197).